Consider the following 598-residue polypeptide: tRNA(Met) cytidine acetyltransferase TmcA (598 aa).

ATP contacts are provided by residues glutamine 141, 163-172, and arginine 288; that span reads GRGKSTLAGK. One can recognise an N-acetyltransferase domain in the interval 332–490; sequence TDLRRLFDAD…HSAMMLYPLS (159 aa). Residues 411–413, 418–424, and arginine 462 each bind acetyl-CoA; these read IAV and QNQGIGS.

This sequence belongs to the RNA cytidine acetyltransferase family. TmcA subfamily.

It is found in the cytoplasm. The catalysed reaction is cytidine(34) in elongator tRNA(Met) + acetyl-CoA + ATP + H2O = N(4)-acetylcytidine(34) in elongator tRNA(Met) + ADP + phosphate + CoA + H(+). Its function is as follows. Catalyzes the formation of N(4)-acetylcytidine (ac(4)C) at the wobble position of tRNA(Met), by using acetyl-CoA as an acetyl donor and ATP (or GTP). This chain is tRNA(Met) cytidine acetyltransferase TmcA, found in Haemophilus ducreyi (strain 35000HP / ATCC 700724).